The following is a 387-amino-acid chain: Probable inactive shikimate kinase like 2, chloroplastic (387 aa).

The N-terminal 71 residues, 1 to 71 (MAAFASGLAI…FNSFSCNCLS (71 aa)), are a transit peptide targeting the chloroplast. The interval 368–387 (NIKPPGWDPSSDTGPHPQFT) is disordered.

This sequence belongs to the shikimate kinase family.

It is found in the plastid. Its subcellular location is the chloroplast. The sequence is that of Probable inactive shikimate kinase like 2, chloroplastic (SKL2) from Arabidopsis thaliana (Mouse-ear cress).